A 109-amino-acid polypeptide reads, in one-letter code: Large ribosomal subunit protein uL22 (109 aa).

It belongs to the universal ribosomal protein uL22 family. As to quaternary structure, part of the 50S ribosomal subunit.

Functionally, this protein binds specifically to 23S rRNA; its binding is stimulated by other ribosomal proteins, e.g. L4, L17, and L20. It is important during the early stages of 50S assembly. It makes multiple contacts with different domains of the 23S rRNA in the assembled 50S subunit and ribosome. The globular domain of the protein is located near the polypeptide exit tunnel on the outside of the subunit, while an extended beta-hairpin is found that lines the wall of the exit tunnel in the center of the 70S ribosome. The protein is Large ribosomal subunit protein uL22 of Thiobacillus denitrificans (strain ATCC 25259 / T1).